Consider the following 562-residue polypeptide: Acetolactate synthase isozyme 1 large subunit (562 aa).

Residue glutamate 60 coordinates thiamine diphosphate. Residues arginine 162, 264–285 (HGVR…LGAR), and 307–326 (DIDR…IQAD) contribute to the FAD site. The segment at 393-473 (QHQMWTAQAY…VKIILMNNEA (81 aa)) is thiamine pyrophosphate binding. Residues aspartate 444 and asparagine 471 each contribute to the Mg(2+) site.

Belongs to the TPP enzyme family. As to quaternary structure, dimer of large and small chains. Mg(2+) is required as a cofactor. Requires thiamine diphosphate as cofactor.

It catalyses the reaction 2 pyruvate + H(+) = (2S)-2-acetolactate + CO2. Its pathway is amino-acid biosynthesis; L-isoleucine biosynthesis; L-isoleucine from 2-oxobutanoate: step 1/4. It functions in the pathway amino-acid biosynthesis; L-valine biosynthesis; L-valine from pyruvate: step 1/4. The polypeptide is Acetolactate synthase isozyme 1 large subunit (ilvB) (Escherichia coli (strain K12)).